The primary structure comprises 463 residues: uncharacterized protein (463 aa).

11 consecutive transmembrane segments (helical) span residues 6-26, 31-51, 60-80, 101-123, 130-152, 189-209, 242-262, 269-289, 304-324, 413-433, and 443-463; these read ILPVHVLYVFFIGAIILFMLL, TFISLFGIFIISLWASHSLSA, FIYAAGELLPTIFIICFIVSM, VRGPVTAYWLIGGLMFAISLFFW, LIGAVLLPAAARAGLTPLAAAMA, ASIPLVLIMGVTTTTAAFIMI, SILAFLIPLAFLADIACMLLF, ATALIGGSAICILFTVHFFVY, GFKFGFKVFGPVIPIAAFFYL, AIWVGGGTLVPWALIPAAAIC, and KNFIPVAIGLLVTTLAAVMML.

The protein localises to the cell membrane. This is an uncharacterized protein from Bacillus subtilis (strain 168).